Here is a 514-residue protein sequence, read N- to C-terminus: Uronyl 2-sulfotransferase homolog pip (514 aa).

Residues 1–30 (MSLNAERSYKMKLRDVENAFKYRRIPYPKR) lie on the Cytoplasmic side of the membrane. A helical; Signal-anchor for type II membrane protein membrane pass occupies residues 31-50 (SVELIALLAISCTFFLFMHT). The Lumenal segment spans residues 51–514 (NKLNSRLKEM…EQQNEYNEDY (464 aa)). Basic and acidic residues predominate over residues 112–121 (HDRRSSEEQL). A disordered region spans residues 112 to 185 (HDRRSSEEQL…DEDEVEENDD (74 aa)). Residues 127 to 140 (HGHHHDHHSHHHHM) are compositionally biased toward basic residues. Over residues 155–170 (HDKQLAVPDNKHKEDE) the composition is skewed to basic and acidic residues. Positions 171-185 (VHYEDDEDEVEENDD) are enriched in acidic residues. Asn-207 carries an N-linked (GlcNAc...) asparagine glycan. The active site involves His-282. Asn-287, Asn-416, Asn-451, and Asn-467 each carry an N-linked (GlcNAc...) asparagine glycan.

This sequence belongs to the sulfotransferase 3 family. Interacts with wbl/windbeutel; the interaction is direct and does not require pip to be folded. Ovary-specific. Specifically expressed in the ventral follicle cells of stage 9-10 egg chambers. In terms of tissue distribution, expressed in ovaries. Specifically expressed in the ventral follicle cells of stage 9-10 egg chambers.

The protein localises to the golgi apparatus membrane. Its function is as follows. Sulfotransferase involved in dorsoventral axis patterning in early embryos. Required for the ventral activation of ea/easter by the protease snk in the perivitelline space between the embryonic membrane and the eggshell; activation of ea requires both activation of the ndl-gd-snk protease cascade and sulfation of a vitelline membrane component by pip. Probably acts by mediating the sulfation of some glycoprotein or glycosaminoglycan stably deposited in the vitelline membrane, whose ventrally localized modification leads to spatially restricted activation of the protease cascade resulting in localized activation of the spz Toll receptor ligand by ea. In terms of biological role, probably required redundantly with isoform H for dorsoventral axis patterning in embryos. Lacks 2-O-sulfotransferase activity towards completely desulfated N-sulfated (CDSNS) heparin, chondroitin, and chondroitin sulfate A, B (dermatan sulfate), and C. Sulfates several components of the eggshell vitelline membrane, including Vml, Vm26Aa, Vm32E and psd/palisade/Fcp26Aa. Probably required redundantly with isoform A for dorsoventral axis patterning in embryos. Functionally, lacks 2-O-sulfotransferase activity towards CDSNS heparin, chondroitin, and chondroitin sulfate A, B (dermatan sulfate), and C. The sequence is that of Uronyl 2-sulfotransferase homolog pip from Drosophila melanogaster (Fruit fly).